Reading from the N-terminus, the 104-residue chain is Ubiquitin-related modifier 1 homolog (104 aa).

G104 is modified (1-thioglycine). A Glycyl lysine isopeptide (Gly-Lys) (interchain with K-? in acceptor proteins) cross-link involves residue G104.

The protein belongs to the URM1 family. In terms of assembly, interacts with cer. Post-translationally, C-terminal thiocarboxylation occurs in 2 steps, it is first acyl-adenylated (-COAMP) via the hesA/moeB/thiF part of the MOCS3 homolog, then thiocarboxylated (-COSH) via the rhodanese domain of the MOCS3 homolog.

Its subcellular location is the cytoplasm. The protein operates within tRNA modification; 5-methoxycarbonylmethyl-2-thiouridine-tRNA biosynthesis. In terms of biological role, acts as a sulfur carrier required for 2-thiolation of mcm(5)S(2)U at tRNA wobble positions of cytosolic tRNA(Lys), tRNA(Glu) and tRNA(Gln). Serves as sulfur donor in tRNA 2-thiolation reaction by being thiocarboxylated (-COSH) at its C-terminus by MOCS3. The sulfur is then transferred to tRNA to form 2-thiolation of mcm(5)S(2)U. Also acts as a ubiquitin-like protein (UBL) that is covalently conjugated via an isopeptide bond to lysine residues of target proteins such as Prx2/Jafrac1, Ciao1, Eip71CD and GILT1. The thiocarboxylated form serves as substrate for conjugation and oxidative stress specifically induces the formation of UBL-protein conjugates. In Drosophila grimshawi (Hawaiian fruit fly), this protein is Ubiquitin-related modifier 1 homolog.